Consider the following 284-residue polypeptide: MSADGRSGRLRFTKMHGAGNDFVVLDLRDGTPPPDAALAAQLADRHFGIGCDQILTIEAPRSEGAAAAYGIWNSDGSAARQCGNGARCVAAWLVRDGTAQGERFIIDSPATAHAVERLDGDRYAVAMGVPQFEPTQIPLAGFAHARDEYALPVHGETVRFGAVSMGNPHAVVEVGRVDAAPVERVGALLQQNAAFPDSVNVGFAQVVDPVHVRLRVFERGVGETLACGSGACAAAAVLMQRGRVERDVQVSLPGGELRIRWPGDQEQVVMSGPAVFVFDGEWNR.

Residues Asn-20, Gln-53, and Asn-73 each coordinate substrate. The Proton donor role is filled by Cys-82. Residues 83–84, Asn-167, Asn-200, and 218–219 each bind substrate; these read GN and ER. Cys-227 serves as the catalytic Proton acceptor. 228–229 contacts substrate; the sequence is GS.

It belongs to the diaminopimelate epimerase family. Homodimer.

Its subcellular location is the cytoplasm. It catalyses the reaction (2S,6S)-2,6-diaminopimelate = meso-2,6-diaminopimelate. Its pathway is amino-acid biosynthesis; L-lysine biosynthesis via DAP pathway; DL-2,6-diaminopimelate from LL-2,6-diaminopimelate: step 1/1. Its function is as follows. Catalyzes the stereoinversion of LL-2,6-diaminopimelate (L,L-DAP) to meso-diaminopimelate (meso-DAP), a precursor of L-lysine and an essential component of the bacterial peptidoglycan. This is Diaminopimelate epimerase from Xanthomonas axonopodis pv. citri (strain 306).